A 237-amino-acid chain; its full sequence is Dihydroceramide fatty acyl 2-hydroxylase FAH1 (237 aa).

Transmembrane regions (helical) follow at residues 50–70 and 80–100; these read LTLTVWWAVPVIWLPVVVWCI and LPEIVPIVVMGIFIWTFFEYV. Residues His-102, His-107, His-123, His-126, and His-127 each coordinate Zn(2+). Transmembrane regions (helical) follow at residues 137–157 and 164–184; these read VFPPTATAILCFPFWNIAKAI and PALFGGGMLGYVMYDVTHYYL. His-181, His-185, His-201, His-204, and His-205 together coordinate Zn(2+).

The protein belongs to the sterol desaturase family. In terms of assembly, interacts with CYTB5-A, CYTB5-B, CYTB5-C and CYTB5-D. Interacts indirectly with BI-1 via CYTB5-D. Requires Zn(2+) as cofactor. Expressed in leaves, roots, flowers and seeds.

It localises to the endoplasmic reticulum membrane. It carries out the reaction an N-(1,2-saturated acyl)sphinganine + 2 Fe(II)-[cytochrome b5] + O2 + 2 H(+) = an N-[(2'R)-hydroxyacyl]sphinganine + 2 Fe(III)-[cytochrome b5] + H2O. Functionally, fatty acid 2-hydroxylase involved in the alpha-hydroxylation of sphingolipid-associated very long-chain fatty acids (VLCFA). Probably involved in the resistance response to oxidative stress. In Arabidopsis thaliana (Mouse-ear cress), this protein is Dihydroceramide fatty acyl 2-hydroxylase FAH1.